The sequence spans 394 residues: Cytochrome c oxidase subunit 2, mitochondrial (394 aa).

Residues 1-119 (ILCPLEAFIV…RNSRLIHSTS (119 aa)) constitute a mitochondrion transit peptide. Residues 120-181 (KIVPNSEIQN…MQGIIDLHHD (62 aa)) lie on the Mitochondrial intermembrane side of the membrane. The helical transmembrane segment at 182–198 (IFFFVIQIGVFVSWVLL) threads the bilayer. Residues 199–226 (RALWHFRSKMNPIPQRIVHGTTIEILWT) lie on the Mitochondrial matrix side of the membrane. Residues 227–243 (IFPSVILMFIAIPSFAL) traverse the membrane as a helical segment. Topologically, residues 244-394 (LYSMDDIVVD…YGSWVSSQVN (151 aa)) are mitochondrial intermembrane. Cu cation-binding residues include histidine 327, cysteine 362, glutamate 364, cysteine 366, histidine 370, and methionine 373. Glutamate 364 provides a ligand contact to Mg(2+).

The protein belongs to the cytochrome c oxidase subunit 2 family. In terms of assembly, component of the cytochrome c oxidase (complex IV, CIV), a multisubunit enzyme composed of a catalytic core of 3 subunits and several supernumerary subunits. The complex exists as a monomer or a dimer and forms supercomplexes (SCs) in the inner mitochondrial membrane with ubiquinol-cytochrome c oxidoreductase (cytochrome b-c1 complex, complex III, CIII). It depends on Cu cation as a cofactor.

The protein localises to the mitochondrion inner membrane. It carries out the reaction 4 Fe(II)-[cytochrome c] + O2 + 8 H(+)(in) = 4 Fe(III)-[cytochrome c] + 2 H2O + 4 H(+)(out). In terms of biological role, component of the cytochrome c oxidase, the last enzyme in the mitochondrial electron transport chain which drives oxidative phosphorylation. The respiratory chain contains 3 multisubunit complexes succinate dehydrogenase (complex II, CII), ubiquinol-cytochrome c oxidoreductase (cytochrome b-c1 complex, complex III, CIII) and cytochrome c oxidase (complex IV, CIV), that cooperate to transfer electrons derived from NADH and succinate to molecular oxygen, creating an electrochemical gradient over the inner membrane that drives transmembrane transport and the ATP synthase. Cytochrome c oxidase is the component of the respiratory chain that catalyzes the reduction of oxygen to water. Electrons originating from reduced cytochrome c in the intermembrane space (IMS) are transferred via the dinuclear copper A center (CU(A)) of subunit 2 and heme A of subunit 1 to the active site in subunit 1, a binuclear center (BNC) formed by heme A3 and copper B (CU(B)). The BNC reduces molecular oxygen to 2 water molecules using 4 electrons from cytochrome c in the IMS and 4 protons from the mitochondrial matrix. The protein is Cytochrome c oxidase subunit 2, mitochondrial (COX2) of Glycine max (Soybean).